A 272-amino-acid polypeptide reads, in one-letter code: MSAAEPFFATRLPRLVMFDLDGTLVDSVPDLTAAVDSMLASFGRPPAGIEKVRQWIGNGARVLVRRALAGSIEHDGIGEEETEAALALFMEAYADSHALTEVYPGVVDTLKWLKRNGVEMALITNKPERFVAPLLDEMKLGRYFRWIIGGDTLPQQKPDPAALLFVMKMAGIEPEDALFVGDSRNDVLAAKAAGVRCAALTYGYNHGRPIAEEAPTLVIDNLRDLLPCADQAAEIVLPDDSLSPSDQRDQAVAVSKLWMKVIKALARWRWRA.

D19 (nucleophile) is an active-site residue. The Mg(2+) site is built by D19, D21, and D182.

The protein belongs to the HAD-like hydrolase superfamily. CbbY/CbbZ/Gph/YieH family. Requires Mg(2+) as cofactor.

It carries out the reaction 2-phosphoglycolate + H2O = glycolate + phosphate. It participates in organic acid metabolism; glycolate biosynthesis; glycolate from 2-phosphoglycolate: step 1/1. Functionally, specifically catalyzes the dephosphorylation of 2-phosphoglycolate. Is involved in the dissimilation of the intracellular 2-phosphoglycolate formed during the DNA repair of 3'-phosphoglycolate ends, a major class of DNA lesions induced by oxidative stress. This Pseudomonas aeruginosa (strain ATCC 15692 / DSM 22644 / CIP 104116 / JCM 14847 / LMG 12228 / 1C / PRS 101 / PAO1) protein is Phosphoglycolate phosphatase 1.